Here is a 355-residue protein sequence, read N- to C-terminus: tRNA uridine(34) hydroxylase (355 aa).

One can recognise a Rhodanese domain in the interval 146-240; that stretch reads DDPDTLFVDM…YARKAKEQGL (95 aa). The active-site Cysteine persulfide intermediate is the C200. The disordered stretch occupies residues 333 to 355; sequence NKSKGLLQATMHIPSPEKSADEK.

The protein belongs to the TrhO family.

The enzyme catalyses uridine(34) in tRNA + AH2 + O2 = 5-hydroxyuridine(34) in tRNA + A + H2O. In terms of biological role, catalyzes oxygen-dependent 5-hydroxyuridine (ho5U) modification at position 34 in tRNAs. The chain is tRNA uridine(34) hydroxylase from Yersinia pseudotuberculosis serotype O:1b (strain IP 31758).